We begin with the raw amino-acid sequence, 336 residues long: Ribosomal RNA large subunit methyltransferase F (336 aa).

It belongs to the methyltransferase superfamily. METTL16/RlmF family.

Its subcellular location is the cytoplasm. The catalysed reaction is adenosine(1618) in 23S rRNA + S-adenosyl-L-methionine = N(6)-methyladenosine(1618) in 23S rRNA + S-adenosyl-L-homocysteine + H(+). Functionally, specifically methylates the adenine in position 1618 of 23S rRNA. This is Ribosomal RNA large subunit methyltransferase F from Yersinia pestis (strain Pestoides F).